Reading from the N-terminus, the 117-residue chain is Toxin CSTX-12 (117 aa).

A signal peptide spans Met-1–Ala-20. Residues Glu-21–Arg-47 constitute a propeptide that is removed on maturation. 4 disulfide bridges follow: Cys-50/Cys-65, Cys-57/Cys-74, Cys-64/Cys-95, and Cys-76/Cys-93. Residues Arg-82 to Arg-87 constitute a propeptide that is removed on maturation. At Ala-116 the chain carries Alanine amide.

This sequence belongs to the neurotoxin 19 (CSTX) family. 12 subfamily. Heterodimer of A and B chains; disulfide-linked. Interacts with CSTX-1 (AC P81694), and with CSTX-9 (AC P58604). As to expression, expressed by the venom gland.

The protein localises to the secreted. It localises to the target cell membrane. Functionally, synergistic toxin that induces or increases a cytolytic effect when combined with CSTX-1 (AC P81694) or CSTX-9 (AC P58604). When alone, has a weak insecticidal activity, with an unknown molecular target. In Cupiennius salei (American wandering spider), this protein is Toxin CSTX-12.